A 51-amino-acid chain; its full sequence is Insulin (51 aa).

Intrachain disulfides connect C7-C37, C19-C50, and C36-C41.

The protein belongs to the insulin family. As to quaternary structure, heterodimer of a B chain and an A chain linked by two disulfide bonds.

It localises to the secreted. Its function is as follows. Insulin decreases blood glucose concentration. It increases cell permeability to monosaccharides, amino acids and fatty acids. It accelerates glycolysis, the pentose phosphate cycle, and glycogen synthesis in liver. This Didelphis virginiana (North American opossum) protein is Insulin (INS).